The sequence spans 1405 residues: DNA-directed RNA polymerase subunit beta' (1405 aa).

Zn(2+) contacts are provided by cysteine 70, cysteine 72, cysteine 85, and cysteine 88. Mg(2+) is bound by residues aspartate 460, aspartate 462, and aspartate 464. 4 residues coordinate Zn(2+): cysteine 814, cysteine 888, cysteine 895, and cysteine 898.

It belongs to the RNA polymerase beta' chain family. As to quaternary structure, the RNAP catalytic core consists of 2 alpha, 1 beta, 1 beta' and 1 omega subunit. When a sigma factor is associated with the core the holoenzyme is formed, which can initiate transcription. Mg(2+) is required as a cofactor. Requires Zn(2+) as cofactor.

The enzyme catalyses RNA(n) + a ribonucleoside 5'-triphosphate = RNA(n+1) + diphosphate. In terms of biological role, DNA-dependent RNA polymerase catalyzes the transcription of DNA into RNA using the four ribonucleoside triphosphates as substrates. The protein is DNA-directed RNA polymerase subunit beta' of Shewanella baltica (strain OS223).